The following is a 619-amino-acid chain: Lateral signaling target protein 2 homolog (619 aa).

An FYVE-type zinc finger spans residues 501 to 561 (DSDCEQCTAC…VCNLCFLYKI (61 aa)). 8 residues coordinate Zn(2+): C507, C510, C523, C526, C531, C534, C553, and C556. The interval 598-619 (HERSQDGSQSNESPTATTATTI) is disordered. A compositionally biased stretch (polar residues) spans 603–619 (DGSQSNESPTATTATTI).

The protein belongs to the lst-2 family.

Functionally, negative regulator of epidermal growth factor receptor (EGFR) signaling. The chain is Lateral signaling target protein 2 homolog from Brugia malayi (Filarial nematode worm).